A 187-amino-acid polypeptide reads, in one-letter code: Orotate phosphoribosyltransferase (187 aa).

Residues Arg-103, Lys-104, Lys-107, and 129–137 (EDVTTSGGS) each bind 5-phospho-alpha-D-ribose 1-diphosphate. 2 residues coordinate orotate: Thr-133 and Arg-161.

This sequence belongs to the purine/pyrimidine phosphoribosyltransferase family. PyrE subfamily. As to quaternary structure, homodimer. It depends on Mg(2+) as a cofactor.

It catalyses the reaction orotidine 5'-phosphate + diphosphate = orotate + 5-phospho-alpha-D-ribose 1-diphosphate. It participates in pyrimidine metabolism; UMP biosynthesis via de novo pathway; UMP from orotate: step 1/2. In terms of biological role, catalyzes the transfer of a ribosyl phosphate group from 5-phosphoribose 1-diphosphate to orotate, leading to the formation of orotidine monophosphate (OMP). This is Orotate phosphoribosyltransferase from Methanosarcina acetivorans (strain ATCC 35395 / DSM 2834 / JCM 12185 / C2A).